A 616-amino-acid polypeptide reads, in one-letter code: 2-isopropylmalate synthase (616 aa).

The segment at 1–34 (MSPNDAFISAPAKIETPVGPRNEGQPAWNKQRGS) is disordered. In terms of domain architecture, Pyruvate carboxyltransferase spans 67–341 (PQWCAVDLRD…DPQLDFTDIR (275 aa)). 4 residues coordinate Mg(2+): Asp76, His280, His282, and Asn316. Residues 490 to 616 (RTAPVEQIAL…NHEAVLAGGV (127 aa)) are regulatory domain.

The protein belongs to the alpha-IPM synthase/homocitrate synthase family. LeuA type 2 subfamily. As to quaternary structure, homodimer. It depends on Mg(2+) as a cofactor.

The protein resides in the cytoplasm. It carries out the reaction 3-methyl-2-oxobutanoate + acetyl-CoA + H2O = (2S)-2-isopropylmalate + CoA + H(+). It participates in amino-acid biosynthesis; L-leucine biosynthesis; L-leucine from 3-methyl-2-oxobutanoate: step 1/4. Its activity is regulated as follows. Inhibited by L-leucine, the pathway end product. Catalyzes the condensation of the acetyl group of acetyl-CoA with 3-methyl-2-oxobutanoate (2-ketoisovalerate) to form 3-carboxy-3-hydroxy-4-methylpentanoate (2-isopropylmalate). Complements an E.coli leuA deletion. This is 2-isopropylmalate synthase from Corynebacterium glutamicum (strain ATCC 13032 / DSM 20300 / JCM 1318 / BCRC 11384 / CCUG 27702 / LMG 3730 / NBRC 12168 / NCIMB 10025 / NRRL B-2784 / 534).